Reading from the N-terminus, the 2073-residue chain is Dedicator of cytokinesis protein 11 (2073 aa).

A Phosphoserine modification is found at Ser-12. Thr-16 is modified (phosphothreonine). Residues Ser-23 and Ser-161 each carry the phosphoserine modification. In terms of domain architecture, PH spans 165 to 272 (GVIKQGWLHK…WLITLKKIIQ (108 aa)). Tyr-248 is modified (phosphotyrosine). Residues Ser-306, Ser-440, and Ser-445 each carry the phosphoserine modification. The region spanning 640–818 (KNHLYVYPLQ…PLLKIKSHLE (179 aa)) is the C2 DOCK-type domain. The tract at residues 1226 to 1267 (FQNGHGIKREDSRGSLIPEGATGFPDQGNTGENTRQSSTRSS) is disordered. Phosphoserine is present on residues Ser-1237 and Ser-1240. In terms of domain architecture, DOCKER spans 1609-2036 (KSYASTPELR…LSDIIHEQIL (428 aa)).

It belongs to the DOCK family. As to quaternary structure, interacts with CDC42.

Guanine nucleotide-exchange factor (GEF) that activates CDC42 by exchanging bound GDP for free GTP. Required for marginal zone (MZ) B-cell development, is associated with early bone marrow B-cell development, MZ B-cell formation, MZ B-cell number and marginal metallophilic macrophages morphology. Facilitates filopodia formation through the activation of CDC42. The sequence is that of Dedicator of cytokinesis protein 11 from Homo sapiens (Human).